The chain runs to 302 residues: Coiled-coil domain-containing protein 2 (302 aa).

A signal peptide spans methionine 1–glycine 22. A coiled-coil region spans residues phenylalanine 198–valine 234. Residues serine 221–aspartate 257 are disordered. The span at glutamine 223–aspartate 257 shows a compositional bias: acidic residues. An N-linked (GlcNAc...) asparagine glycan is attached at asparagine 242.

As to expression, component of the acid-insoluble organic matrix of calcified layers of the shell (at protein level).

It is found in the secreted. This is Coiled-coil domain-containing protein 2 from Lottia gigantea (Giant owl limpet).